A 70-amino-acid chain; its full sequence is MFKLIKKLGQLLVRMYNVEAKRLNDEARKEATQSRALAIRSNELADSASTKVTEAARVANQAQQLSKFFE.

This is Protein 4.3 from Escherichia coli (Bacteriophage T7).